The chain runs to 196 residues: DnaA initiator-associating protein DiaA (196 aa).

Residues 34 to 196 (LVHSLLNGNK…DNTLFPHQDD (163 aa)) enclose the SIS domain.

The protein belongs to the SIS family. DiaA subfamily. Homotetramer; dimer of dimers.

In terms of biological role, required for the timely initiation of chromosomal replication via direct interactions with the DnaA initiator protein. The polypeptide is DnaA initiator-associating protein DiaA (Citrobacter koseri (strain ATCC BAA-895 / CDC 4225-83 / SGSC4696)).